A 1427-amino-acid polypeptide reads, in one-letter code: Multidrug resistance-associated protein 5 (1427 aa).

At 1–147 (MPSDSEEVCL…IYRFISTRLW (147 aa)) the chain is on the cytoplasmic side. A helical transmembrane segment spans residues 148 to 168 (FSCAVFFFCLIFGFIGPTCFI). The ABC transmembrane type-1 1 domain occupies 151–432 (AVFFFCLIFG…IPYGSRYLAE (282 aa)). At 169 to 185 (RRLIAFAENPERDEQSR) the chain is on the extracellular side. A helical membrane pass occupies residues 186 to 206 (IVYSYGIALVAAISVVEFARV). At 207–268 (LSYGATWAVS…RLFDAVTFAP (62 aa)) the chain is on the cytoplasmic side. Residues 269 to 289 (LVLVGPLVLVGGIGYLLMVIG) form a helical membrane-spanning segment. R290 is a topological domain (extracellular). Residues 291-311 (WSLLGILVFFVFDVIQFGLGK) traverse the membrane as a helical segment. The Cytoplasmic portion of the chain corresponds to 312 to 375 (SMVACRNLAI…RKSGYAQSLA (64 aa)). The chain crosses the membrane as a helical span at residues 376 to 396 (IACGPVVPVVAAILTFVGVVL). Residues 397–399 (AGN) lie on the Extracellular side of the membrane. A helical transmembrane segment spans residues 400-420 (DLLASDAFSAITVYFVMLFGI). The Cytoplasmic portion of the chain corresponds to 421–770 (RMIPYGSRYL…TIAWRIYKQY (350 aa)). The ABC transporter 1 domain maps to 486–707 (PTENEVIVVE…NDAYKTFVDA (222 aa)). 518 to 525 (GAVGCGKS) is a binding site for ATP. The helical transmembrane segment at 771 to 791 (IHAAGGWPIWTCLVIGFIVNV) threads the bilayer. The ABC transmembrane type-1 2 domain occupies 783-1078 (LVIGFIVNVV…AVRTQTELEA (296 aa)). Over 792–833 (VSNIFSTYWLSRWLKKGHDETTTITNGTEFLEMKTSLADSPV) the chain is Extracellular. N-linked (GlcNAc...) asparagine glycosylation occurs at N817. Residues 834-854 (TGFYAAVYLVALVVLTISGLF) traverse the membrane as a helical segment. The Cytoplasmic segment spans residues 855-909 (KACVFVKVSLTAATRLHDRMFQAVIHGATSFFDSTPTGRILNRFSKDMDEIDVKL). Residues 910–930 (PFTAEVFLQNMITCLGFLVVI) form a helical membrane-spanning segment. T931 is a topological domain (extracellular). Residues 932–952 (SVFPYFLLFAIPLFVVFVVFV) traverse the membrane as a helical segment. The Cytoplasmic segment spans residues 953 to 1022 (SCFRAGIRNL…MFQSAMRWLA (70 aa)). Residues 1023-1043 (VWLDLLVVVMTAIVALLTVML) form a helical membrane-spanning segment. At 1044-1049 (TGTVSP) the chain is on the extracellular side. The helical transmembrane segment at 1050–1070 (ADAGMAIAFAVQMSGIFQFAV) threads the bilayer. The Cytoplasmic segment spans residues 1071–1427 (RTQTELEAKM…SSDTDIEVVQ (357 aa)). The ABC transporter 2 domain occupies 1117 to 1351 (INFSEVNLRY…DWSVYKLEDK (235 aa)). Residue 1151 to 1158 (GRTGSGKS) participates in ATP binding. The interval 1361 to 1427 (VGENSEHSME…SSDTDIEVVQ (67 aa)) is disordered. Basic and acidic residues predominate over residues 1382-1418 (DIVKVENEQKDSSDDVVHIESGDDDVKADSSEVKETS).

The protein belongs to the ABC transporter superfamily. ABCC family. Conjugate transporter (TC 3.A.1.208) subfamily. As to expression, highly expressed in the intestine and pharynx. Expressed at low levels in the hypodermis and in some neurons.

It is found in the basolateral cell membrane. Heme transporter required for the export of intestinal heme to different tissues and subcellular compartments. Also, required for the export of vitamin B12 from the intestine of the mother to the embryo to support embryonic development. This chain is Multidrug resistance-associated protein 5, found in Caenorhabditis elegans.